Consider the following 374-residue polypeptide: Flavonoid O-methyltransferase-like protein Os11g0303600 (374 aa).

Positions 242, 262, 263, and 276 each coordinate S-adenosyl-L-homocysteine. The Proton acceptor role is filled by H280.

It belongs to the class I-like SAM-binding methyltransferase superfamily. Cation-independent O-methyltransferase family. COMT subfamily.

In Oryza sativa subsp. japonica (Rice), this protein is Flavonoid O-methyltransferase-like protein Os11g0303600.